A 452-amino-acid polypeptide reads, in one-letter code: UDP-N-acetylmuramate--L-alanine ligase (452 aa).

Residue Gly110–Thr116 participates in ATP binding.

Belongs to the MurCDEF family.

The protein resides in the cytoplasm. The enzyme catalyses UDP-N-acetyl-alpha-D-muramate + L-alanine + ATP = UDP-N-acetyl-alpha-D-muramoyl-L-alanine + ADP + phosphate + H(+). It functions in the pathway cell wall biogenesis; peptidoglycan biosynthesis. In terms of biological role, cell wall formation. The chain is UDP-N-acetylmuramate--L-alanine ligase from Francisella philomiragia subsp. philomiragia (strain ATCC 25017 / CCUG 19701 / FSC 153 / O#319-036).